The sequence spans 591 residues: Heterogeneous nuclear ribonucleoprotein L-like (591 aa).

Positions 1-120 (MSSSSSSSPK…STEGGGSHHK (120 aa)) are disordered. Residues 20–31 (FESQAKRLKTEE) show a composition bias toward basic and acidic residues. Lys-28 is covalently cross-linked (Glycyl lysine isopeptide (Lys-Gly) (interchain with G-Cter in SUMO2)). Residue Ser-37 is modified to Phosphoserine. Phosphothreonine is present on Thr-48. Gly residues predominate over residues 57-73 (SGGGDGGDGDGGSGGGG). Residues 74 to 91 (DGEEGEGGEEGDEGDGDE) show a composition bias toward acidic residues. Residues 92-105 (GGSGGDEGGSGGGP) show a composition bias toward gly residues. Ser-107, Ser-117, and Ser-124 each carry phosphoserine. RRM domains follow at residues 125–199 (PVVH…YSTS), 215–293 (NKVL…YARP), and 384–458 (SVVM…VSKQ). Lys-540 is covalently cross-linked (Glycyl lysine isopeptide (Lys-Gly) (interchain with G-Cter in SUMO2)).

In terms of assembly, interacts with HNRNPL.

Its function is as follows. RNA-binding protein that functions as a regulator of alternative splicing for multiple target mRNAs, including PTPRC/CD45 and STAT5A. Required for alternative splicing of PTPRC. This chain is Heterogeneous nuclear ribonucleoprotein L-like (Hnrnpll), found in Mus musculus (Mouse).